A 218-amino-acid polypeptide reads, in one-letter code: MVAWRSAFLVCLAFSLATLVQRGSGDFDDFNLKDAVKETSSVKQRWNHVTTTTKRPVTTRAPANTLGNDFDLADALDDRNDRDDGRRKPIAGGGGFSDKDLEDIVGGGEYKPDKGKGDGRYGSNDDPGSGMVAETGTIAGVASALAMALIGAVSSYISYQQKKFCFSIQHAAEGQEGLNADYVKGENLEAVVCEEPQVKYSALHTQSAEPPPSEPARI.

A signal peptide spans 1-25 (MVAWRSAFLVCLAFSLATLVQRGSG). Over 26 to 136 (DFDDFNLKDA…PGSGMVAETG (111 aa)) the chain is Extracellular. A disordered region spans residues 72 to 128 (LADALDDRNDRDDGRRKPIAGGGGFSDKDLEDIVGGGEYKPDKGKGDGRYGSNDDPG). 2 stretches are compositionally biased toward basic and acidic residues: residues 76-87 (LDDRNDRDDGRR) and 110-119 (YKPDKGKGDG). Ser129 is a glycosylation site (O-linked (Xyl...) (chondroitin sulfate) serine). A helical transmembrane segment spans residues 137-157 (TIAGVASALAMALIGAVSSYI). Residues 158-218 (SYQQKKFCFS…EPPPSEPARI (61 aa)) are Cytoplasmic-facing.

Belongs to the CD99 family. In terms of processing, O-glycosylated.

The protein localises to the cell membrane. It localises to the cell junction. Its subcellular location is the secreted. Plays a role in a late step of leukocyte extravasation helping cells to overcome the endothelial basement membrane. Acts at the same site as, but independently of, PECAM1. Homophilic adhesion molecule, but these interactions may not be required for cell aggregation. In Pongo abelii (Sumatran orangutan), this protein is CD99 antigen-like protein 2 (CD99L2).